We begin with the raw amino-acid sequence, 514 residues long: Putative GTP-binding protein 6 (514 aa).

The segment at 48-71 (WAGGGPVRGGGEEDPREDEEEEED) is disordered. Positions 59-71 (EEDPREDEEEEED) are enriched in acidic residues. In terms of domain architecture, Hflx-type G spans 285-449 (PVVSVVGYTN…ALEASVLRAT (165 aa)). Mg(2+) is bound by residues Thr-298 and Thr-319.

Belongs to the TRAFAC class OBG-HflX-like GTPase superfamily. HflX GTPase family. Mg(2+) is required as a cofactor.

This chain is Putative GTP-binding protein 6 (Gtpbp6), found in Mus musculus (Mouse).